A 277-amino-acid polypeptide reads, in one-letter code: Cell death abnormality protein 2 (277 aa).

In terms of domain architecture, SH2 spans 14-112 (FYFPGMSRED…EASLLSAYKK (99 aa)). Residues 113-173 (PIIEVVVGTF…PANYVQVQSG (61 aa)) form the SH3 1 domain. A disordered region spans residues 179–217 (RISKGTSQSSIGSSGNGAERFSSTSTSSENAEAHPTLPT). The span at 182 to 206 (KGTSQSSIGSSGNGAERFSSTSTSS) shows a compositional bias: low complexity. One can recognise an SH3 2 domain in the interval 214-275 (TLPTTAKVTF…PFTYIRFNTA (62 aa)).

It belongs to the CRK family. As to quaternary structure, interacts with ced-5 (via C-terminus which contains a candidate SH3-binding, proline-rich region). Forms a ternary complex with ced-5 and ced-12. Interacts (via SH-2 domain) with src-1 (when activated and phosphorylated at 'Tyr-416').

In terms of biological role, required for cell migration and engulfment of cell corpses but not for programmed cell death/apoptosis. Also has a role in the migration of the 2 gonadal distal tip cells (DTCs). In Caenorhabditis briggsae, this protein is Cell death abnormality protein 2.